The chain runs to 749 residues: Ribosomal RNA large subunit methyltransferase K/L (749 aa).

The THUMP domain maps to 43-154 (QGYKVCLWSR…KDKATIYLDL (112 aa)). A disordered region spans residues 386–406 (VEPVAPKKTNKETPEPINPWT).

Belongs to the methyltransferase superfamily. RlmKL family.

The protein localises to the cytoplasm. It carries out the reaction guanosine(2445) in 23S rRNA + S-adenosyl-L-methionine = N(2)-methylguanosine(2445) in 23S rRNA + S-adenosyl-L-homocysteine + H(+). The enzyme catalyses guanosine(2069) in 23S rRNA + S-adenosyl-L-methionine = N(2)-methylguanosine(2069) in 23S rRNA + S-adenosyl-L-homocysteine + H(+). In terms of biological role, specifically methylates the guanine in position 2445 (m2G2445) and the guanine in position 2069 (m7G2069) of 23S rRNA. This Psychromonas ingrahamii (strain DSM 17664 / CCUG 51855 / 37) protein is Ribosomal RNA large subunit methyltransferase K/L.